The primary structure comprises 116 residues: Cell division protein FtsL (116 aa).

Over 1-24 (MMLTNRQIRVRLFESLKNSFFKKT) the chain is Cytoplasmic. Residues 25–45 (VGISFALLFILLITAFSLIVV) traverse the membrane as a helical segment. The Periplasmic portion of the chain corresponds to 46-116 (RFEYKLQLNE…NEQKEELNNE (71 aa)).

Belongs to the FtsL family. As to quaternary structure, part of a complex composed of FtsB, FtsL and FtsQ.

It is found in the cell inner membrane. Functionally, essential cell division protein. May link together the upstream cell division proteins, which are predominantly cytoplasmic, with the downstream cell division proteins, which are predominantly periplasmic. The protein is Cell division protein FtsL of Francisella tularensis subsp. tularensis (strain SCHU S4 / Schu 4).